The sequence spans 550 residues: Major fimbrium tip subunit FimE (550 aa).

Positions 1–21 (MKSKSIIAQLLYVLIAFMAVS) are cleaved as a signal peptide. Residue cysteine 22 is the site of N-palmitoyl cysteine attachment. Cysteine 22 carries the S-diacylglycerol cysteine lipid modification. Residues 22 to 51 (CVADKSEPCPSGEPTRVSGSIVSLEHHGLR) constitute a propeptide that is removed on maturation.

The protein belongs to the FimE family. In terms of assembly, fimbriae are composed of a major, structural subunit and the minor components FimC, FimD and FimE. Identified in a complex composed of FimC, FimD and FimE (in vitro). Does not directly interact with host proteins, but only as a complex with FimC and FimD.

The protein localises to the fimbrium. It is found in the cell outer membrane. Probably a component of the fimbrium tip; required for incorporation of FimC and FimD into fimbriae. These long, filamentous pili are attached to the cell surface; they mediate biofilm formation, adhesion onto host cells and onto other bacteria that are part of the oral microbiome. They play an important role in invasion of periodontal tissues and are major virulence factors. FimC, FimD and FimE contribute to interaction with host CXCR4 and thereby down-regulate the TLR2-mediated host immune response. This is Major fimbrium tip subunit FimE from Porphyromonas gingivalis (strain ATCC 33277 / DSM 20709 / CIP 103683 / JCM 12257 / NCTC 11834 / 2561).